A 471-amino-acid chain; its full sequence is Delta(24(24(1)))-sterol reductase erg4A (471 aa).

Residue N15 is glycosylated (N-linked (GlcNAc...) asparagine). A run of 8 helical transmembrane segments spans residues 33 to 53, 89 to 109, 130 to 150, 159 to 179, 216 to 236, 244 to 264, 282 to 302, and 313 to 333; these read VTLIMIGFPLLMYYMYIGAVL, WTIYWTFLILEGAGYLYLPGV, AVSSWYLTIAAALILHFTGVL, FGPLMSVAICSGIFVSIVAYI, MFFEVRIPWFILFLLTLGTAL, LVAGEVLFLLMAHFLYANACA, GFMLIFWNLAGVPMSYCHCTL, and HWNPWVLAVWAVAYLFMYWVW. Residues K340, R344, L380, and 392 to 393 each bind NADP(+); that span reads HY. A helical transmembrane segment spans residues 397–417; it reads VFFAISWGLITGFNSPFPWFY. NADP(+) is bound by residues D432, 436-440, and Y447; that span reads CRERY.

Belongs to the ERG4/ERG24 family.

The protein resides in the endoplasmic reticulum membrane. The catalysed reaction is ergosterol + NADP(+) = ergosta-5,7,22,24(28)-tetraen-3beta-ol + NADPH + H(+). Its pathway is steroid metabolism; ergosterol biosynthesis. Its function is as follows. Delta(24(24(1)))-sterol reductase; part of the third module of ergosterol biosynthesis pathway that includes the late steps of the pathway. Catalyzes the last step of ergosterol biosynthesis by converting ergosta-5,7,22,24(28)-tetraen-3beta-ol into ergosterol. The third module or late pathway involves the ergosterol synthesis itself through consecutive reactions that mainly occur in the endoplasmic reticulum (ER) membrane. Firstly, the squalene synthase erg9 catalyzes the condensation of 2 farnesyl pyrophosphate moieties to form squalene, which is the precursor of all steroids. Squalene synthase is crucial for balancing the incorporation of farnesyl diphosphate (FPP) into sterol and nonsterol isoprene synthesis. Secondly, squalene is converted into lanosterol by the consecutive action of the squalene epoxidase erg1 and the lanosterol synthase erg7. Then, the delta(24)-sterol C-methyltransferase erg6 methylates lanosterol at C-24 to produce eburicol. Eburicol is the substrate of the sterol 14-alpha demethylase encoded by cyp51A and cyp51B, to yield 4,4,24-trimethyl ergosta-8,14,24(28)-trienol. The C-14 reductase erg24 then reduces the C14=C15 double bond which leads to 4,4-dimethylfecosterol. A sequence of further demethylations at C-4, involving the C-4 demethylation complex containing the C-4 methylsterol oxidases erg25A or erg25B, the sterol-4-alpha-carboxylate 3-dehydrogenase erg26 and the 3-keto-steroid reductase erg27, leads to the production of fecosterol via 4-methylfecosterol. The C-8 sterol isomerase erg2 then catalyzes the reaction which results in unsaturation at C-7 in the B ring of sterols and thus converts fecosterol to episterol. The sterol-C5-desaturase erg3B then catalyzes the introduction of a C-5 double bond in the B ring to produce 5-dehydroepisterol. The 2 other sterol-C5-desaturases, erg3A and erg3C, seem to be less important in ergosterol biosynthesis. The C-22 sterol desaturase erg5 further converts 5-dehydroepisterol into ergosta-5,7,22,24(28)-tetraen-3beta-ol by forming the C-22(23) double bond in the sterol side chain. Finally, ergosta-5,7,22,24(28)-tetraen-3beta-ol is substrate of the C-24(28) sterol reductases erg4A and erg4B to produce ergosterol. Possible alternative sterol biosynthetic pathways might exist from fecosterol to ergosterol, depending on the activities of the erg3 isoforms. The polypeptide is Delta(24(24(1)))-sterol reductase erg4A (Aspergillus fumigatus (strain ATCC MYA-4609 / CBS 101355 / FGSC A1100 / Af293) (Neosartorya fumigata)).